We begin with the raw amino-acid sequence, 558 residues long: CTP synthase (558 aa).

The interval 1-267 is amidoligase domain; the sequence is MTKFVFVTGG…AQQTLELLNL (267 aa). CTP is bound at residue Ser-13. Ser-13 lines the UTP pocket. ATP-binding positions include 14-19 and Asp-71; that span reads SIGKGI. Residues Asp-71 and Glu-141 each coordinate Mg(2+). Residues 148–150, 188–193, and Lys-224 each bind CTP; these read DIE and KTKPTQ. UTP is bound by residues 188-193 and Lys-224; that span reads KTKPTQ. Residues 292-534 form the Glutamine amidotransferase type-1 domain; the sequence is EVALVGKYVQ…VKASVDYNHV (243 aa). Gly-354 is an L-glutamine binding site. The active-site Nucleophile; for glutamine hydrolysis is the Cys-381. Residues 382-385, Glu-405, and Arg-462 each bind L-glutamine; that span reads MGMQ. Active-site residues include His-507 and Glu-509.

It belongs to the CTP synthase family. As to quaternary structure, homotetramer.

It carries out the reaction UTP + L-glutamine + ATP + H2O = CTP + L-glutamate + ADP + phosphate + 2 H(+). The catalysed reaction is L-glutamine + H2O = L-glutamate + NH4(+). It catalyses the reaction UTP + NH4(+) + ATP = CTP + ADP + phosphate + 2 H(+). The protein operates within pyrimidine metabolism; CTP biosynthesis via de novo pathway; CTP from UDP: step 2/2. With respect to regulation, allosterically activated by GTP, when glutamine is the substrate; GTP has no effect on the reaction when ammonia is the substrate. The allosteric effector GTP functions by stabilizing the protein conformation that binds the tetrahedral intermediate(s) formed during glutamine hydrolysis. Inhibited by the product CTP, via allosteric rather than competitive inhibition. Its function is as follows. Catalyzes the ATP-dependent amination of UTP to CTP with either L-glutamine or ammonia as the source of nitrogen. Regulates intracellular CTP levels through interactions with the four ribonucleotide triphosphates. The chain is CTP synthase from Gloeothece citriformis (strain PCC 7424) (Cyanothece sp. (strain PCC 7424)).